The primary structure comprises 500 residues: NAD(P)H-quinone oxidoreductase chain 4, chloroplastic (500 aa).

14 consecutive transmembrane segments (helical) span residues 4 to 24 (FPWLTIIVVLPIFAGSLIFFL), 31 to 51 (VIFWYTICISILELLLTTYAF), 84 to 104 (GLSIGPILLTGFITTLATLAA), 111 to 131 (ARLFHFLMLVMYSGQIGLFSC), 134 to 154 (LLLFFLMWEFELIPVYLLLSM), 167 to 187 (FILYTAGGSVFLLMGALGIGL), 212 to 232 (IFYIGFFIAFAVKLPIIPLHT), 242 to 262 (HYSTCMLLAGILLKMGAYGLV), 272 to 292 (AHSLFSPWLMIVGAMQIIYAA), 308 to 328 (SSVSHMGFLIIGIGSITDIGL), 330 to 350 (GALLQIISHGFIGAALFFLAG), 386 to 406 (LALPGMSGFVTEFIVFFGLIT), 411 to 431 (LLMAKILIPFVMAIGIILTPI), and 462 to 482 (LFLSISIFLPILGIGLYPDFV).

The protein belongs to the complex I subunit 4 family.

The protein localises to the plastid. Its subcellular location is the chloroplast thylakoid membrane. It catalyses the reaction a plastoquinone + NADH + (n+1) H(+)(in) = a plastoquinol + NAD(+) + n H(+)(out). The catalysed reaction is a plastoquinone + NADPH + (n+1) H(+)(in) = a plastoquinol + NADP(+) + n H(+)(out). The chain is NAD(P)H-quinone oxidoreductase chain 4, chloroplastic from Jasminum nudiflorum (Winter jasmine).